The sequence spans 114 residues: UPF0339 protein PM0519 (114 aa).

2 repeat units span residues 11–59 (AKDG…NFEV) and 62–110 (AKND…IKDL).

The protein belongs to the UPF0339 family. Duplicated subfamily.

The polypeptide is UPF0339 protein PM0519 (Pasteurella multocida (strain Pm70)).